The following is a 411-amino-acid chain: Exodeoxyribonuclease 7 large subunit (411 aa).

The protein belongs to the XseA family. As to quaternary structure, heterooligomer composed of large and small subunits.

It localises to the cytoplasm. The catalysed reaction is Exonucleolytic cleavage in either 5'- to 3'- or 3'- to 5'-direction to yield nucleoside 5'-phosphates.. Bidirectionally degrades single-stranded DNA into large acid-insoluble oligonucleotides, which are then degraded further into small acid-soluble oligonucleotides. This chain is Exodeoxyribonuclease 7 large subunit, found in Mycobacterium sp. (strain KMS).